The following is a 382-amino-acid chain: D-galactonate dehydratase (382 aa).

Residue aspartate 183 coordinates Mg(2+). Residue histidine 185 is the Proton donor of the active site. Residues glutamate 209 and glutamate 235 each contribute to the Mg(2+) site. The active-site Proton acceptor is the histidine 285.

This sequence belongs to the mandelate racemase/muconate lactonizing enzyme family. GalD subfamily. Mg(2+) serves as cofactor.

It carries out the reaction D-galactonate = 2-dehydro-3-deoxy-D-galactonate + H2O. Its pathway is carbohydrate acid metabolism; D-galactonate degradation; D-glyceraldehyde 3-phosphate and pyruvate from D-galactonate: step 1/3. Catalyzes the dehydration of D-galactonate to 2-keto-3-deoxy-D-galactonate. The polypeptide is D-galactonate dehydratase (Salmonella gallinarum (strain 287/91 / NCTC 13346)).